Here is a 241-residue protein sequence, read N- to C-terminus: ATP synthase subunit a (241 aa).

Transmembrane regions (helical) follow at residues 29 to 49 (NSSLFMMISVILVILFLLFGI), 54 to 74 (VIPGYLQAAVEYVYDFVISII), 86 to 106 (IPLIFTVFIFILSCNLVGVLP), 114 to 134 (HVIVTFALSMVVFIYITIVGF), 153 to 173 (WLAPIIIIIKLFAYLVRPVSL), 177 to 197 (LAANMIAGHTIIKVIAGFIVN), 200 to 220 (IFFTPAPFLFIIALIGFEVFV), and 221 to 241 (AILQAYIFTILTCVYLSDAVK).

The protein belongs to the ATPase A chain family. F-type ATPases have 2 components, CF(1) - the catalytic core - and CF(0) - the membrane proton channel. CF(1) has five subunits: alpha(3), beta(3), gamma(1), delta(1), epsilon(1). CF(0) has three main subunits: a(1), b(2) and c(9-12). The alpha and beta chains form an alternating ring which encloses part of the gamma chain. CF(1) is attached to CF(0) by a central stalk formed by the gamma and epsilon chains, while a peripheral stalk is formed by the delta and b chains.

The protein localises to the cell inner membrane. Key component of the proton channel; it plays a direct role in the translocation of protons across the membrane. The protein is ATP synthase subunit a of Wolbachia sp. subsp. Drosophila simulans (strain wRi).